A 394-amino-acid polypeptide reads, in one-letter code: Upstream-binding factor 1-like protein 1 (394 aa).

The HMG box 1 DNA-binding region spans 101–169; the sequence is PKRPLTAYLR…DFQKKMRQFK (69 aa). Over residues 167 to 180 the composition is skewed to basic residues; sequence QFKKRHPVSGHPKK. Residues 167–197 are disordered; that stretch reads QFKKRHPVSGHPKKSVVPQSHPTKVPTKSQG. Over residues 183 to 197 the composition is skewed to polar residues; sequence VPQSHPTKVPTKSQG. Positions 225 to 291 form a DNA-binding region, HMG box 2; it reads RKPPMNAYHK…QYRVKLDLWL (67 aa). The segment at 305 to 394 is disordered; that stretch reads AKATCGKRKN…SDSSSTDEDD (90 aa).

The protein localises to the cytoplasm. It is found in the nucleus. Functionally, essential for proliferation of the inner cell mass and trophectodermal cells in peri-implantation development. This chain is Upstream-binding factor 1-like protein 1, found in Mus musculus (Mouse).